Consider the following 300-residue polypeptide: F-box/LRR-repeat protein 15 (300 aa).

The residue at position 1 (methionine 1) is an N-acetylmethionine. Positions 19 to 66 (LLDLPWEDVLLPHILSRVPLRQLLRLQRVSRAFRALVQLHLAGLRRFD) constitute an F-box domain. The interaction with SMURF1 stretch occupies residues 113–269 (NPQLRSVALA…EPSLSRLRKR (157 aa)). LRR repeat units lie at residues 141–162 (RLQR…RGLA), 167–188 (ALEE…VYLA), 194–215 (GLRS…QELA), 220–241 (ELEH…RTLA), and 246–267 (ALRS…SRLR).

This sequence belongs to the FBXL15 family. Part of the SCF (SKP1-CUL1-F-box) E3 ubiquitin-protein ligase complex SCF(FBXL15) composed of CUL1, SKP1, RBX1 and FBXL15.

The protein resides in the cytoplasm. Its pathway is protein modification; protein ubiquitination. In terms of biological role, substrate recognition component of a SCF (SKP1-CUL1-F-box protein) E3 ubiquitin-protein ligase complex which mediates the ubiquitination and subsequent proteasomal degradation of SMURF1, thereby acting as a positive regulator of the BMP signaling pathway. Required for dorsal/ventral pattern formation and bone mass maintenance. Also mediates ubiquitination of SMURF2 and WWP2. The sequence is that of F-box/LRR-repeat protein 15 (FBXL15) from Canis lupus familiaris (Dog).